The chain runs to 726 residues: Sensory/regulatory protein RpfC (726 aa).

The Periplasmic segment spans residues 1 to 22 (MKSPLPWLKRRLSGRADSEHAQ). Residues 1 to 22 (MKSPLPWLKRRLSGRADSEHAQ) are sensor. The chain crosses the membrane as a helical span at residues 23-40 (NLIRIIITTLFISYLGWR). At 41–51 (YQHTHGDTLMA) the chain is on the cytoplasmic side. A helical membrane pass occupies residues 52-72 (TWLILVGELLVSLGLMVAILL). Topologically, residues 73 to 94 (RPQVSHTRRLIGMLLDYTCTGA) are periplasmic. Residues 95–115 (IMAIQGEPASPLYAVCMWVTI) traverse the membrane as a helical segment. Topologically, residues 116 to 127 (GNGLRYGSNYLR) are cytoplasmic. A helical membrane pass occupies residues 128 to 148 (AATAMGSLCFLGAILISPYWK). Topologically, residues 149–151 (ANP) are periplasmic. The helical transmembrane segment at 152 to 172 (YLSWGLLLGLIAVPLYFDSLL) threads the bilayer. Residues 173 to 726 (RAMTRAVREA…DGECSPRSNE (554 aa)) lie on the Cytoplasmic side of the membrane. One can recognise a Histidine kinase domain in the interval 195 to 417 (NMSHEFRTPL…VFWFELPMAI (223 aa)). The residue at position 198 (His-198) is a Phosphohistidine; by autocatalysis. The Response regulatory domain occupies 463 to 581 (RMLVADDHEA…KLLDTLADLA (119 aa)). Asp-512 carries the post-translational modification 4-aspartylphosphate. In terms of domain architecture, HPt spans 618-711 (GEEFERQFVR…KAGKDALDAR (94 aa)). Residue His-657 is modified to Phosphohistidine.

As to quaternary structure, at low DSF concentrations, interacts with RpfF. Post-translationally, autophosphorylated. Activation may require a sequential transfer of a phosphate group from a His in the primary transmitter domain, to an Asp in the receiver domain and to a His in the secondary transmitter domain.

The protein resides in the cell inner membrane. The enzyme catalyses ATP + protein L-histidine = ADP + protein N-phospho-L-histidine.. Its activity is regulated as follows. Binding of DSF to the sensor region causes allosteric change, which facilitates RpfC autophosphorylation. In terms of biological role, hybrid sensor kinase that regulates diverse biological functions through two distinct molecular mechanisms. At low cell density, the extracellular concentration of the diffusible signaling factor (DSF) is below a threshold, and unphosphorylated RpfC is involved in the negative regulation of DSF synthesis, via direct interaction with the DSF synthase RpfF. Interaction prevents synthesis of DSF, which remains at a basal level. This activity does not involve the phosphorelay mechanism and is not dependent on RpfG. Is also member of the two-component regulatory system RpfG/RpfC, which is involved in the perception and response to DSF, which is essential for cell-cell signaling. At high cell density, the level of extracellular DSF increases and binding of DSF to the sensor region of RpfC causes autophosphorylation of RpfC, which results in the release of RpfF and the activation of RpfG via a four-step phosphorelay. Activation of RpfG leads to the positive regulation of biofilm dispersal and the production of virulence factors. The chain is Sensory/regulatory protein RpfC (rpfC) from Xanthomonas campestris pv. campestris (strain 8004).